Reading from the N-terminus, the 131-residue chain is UPF0102 protein YraN (131 aa).

This sequence belongs to the UPF0102 family.

In Salmonella typhimurium (strain LT2 / SGSC1412 / ATCC 700720), this protein is UPF0102 protein YraN.